Consider the following 216-residue polypeptide: Probable GTP-binding protein EngB (216 aa).

The EngB-type G domain occupies 27-201 (GGVEIAFAGR…AQTLTGWYLA (175 aa)). Residues 35–42 (GRSNAGKS), 62–66 (GRTQL), 80–83 (DLPG), 147–150 (TKAD), and 180–182 (FSS) contribute to the GTP site. Residues S42 and T64 each contribute to the Mg(2+) site.

Belongs to the TRAFAC class TrmE-Era-EngA-EngB-Septin-like GTPase superfamily. EngB GTPase family. Mg(2+) serves as cofactor.

In terms of biological role, necessary for normal cell division and for the maintenance of normal septation. This chain is Probable GTP-binding protein EngB, found in Aeromonas hydrophila subsp. hydrophila (strain ATCC 7966 / DSM 30187 / BCRC 13018 / CCUG 14551 / JCM 1027 / KCTC 2358 / NCIMB 9240 / NCTC 8049).